Consider the following 461-residue polypeptide: Transcription factor SOX-10 (461 aa).

Disordered regions lie at residues 1–60, 154–191, 205–268, 350–369, and 433–461; these read MADD…ADDD, LRMQHKKDHPDYKYQPRRRKNGKATQGEGEGQVEGEAG, LDHR…DFGN, KAQVKTEGSAPGGHYTDQPS, and AISDPAPSVPQSHSPTHWEQPVYTTLSRP. Over residues 30–42 the composition is skewed to polar residues; that stretch reads ASDNSSHLASSGN. The segment at 56–96 is dimerization (DIM); sequence EADDDKFPVCIREAVSQVLSGYDWTLVPMPVRVNGSNKSKP. The segment at residues 98 to 166 is a DNA-binding region (HMG box); that stretch reads VKRPMNAFMV…QHKKDHPDYK (69 aa). A compositionally biased stretch (basic and acidic residues) spans 154 to 167; the sequence is LRMQHKKDHPDYKY. Gly residues predominate over residues 181–191; that stretch reads EGEGQVEGEAG. A transactivation domain (TAM) region spans residues 221-306; it reads PEHSSGQSHG…NGHAGHPGHV (86 aa). Residues 247–264 show a composition bias toward basic and acidic residues; sequence ADSKREGRSLGEGGKPHI. The interval 350-461 is transactivation domain (TAC); it reads KAQVKTEGSA…QPVYTTLSRP (112 aa). A compositionally biased stretch (polar residues) spans 441–461; sequence VPQSHSPTHWEQPVYTTLSRP.

It is found in the cytoplasm. The protein localises to the nucleus. Transcription factor that plays a central role in developing and mature glia. Specifically activates expression of myelin genes, during oligodendrocyte (OL) maturation, thereby playing a central role in oligodendrocyte maturation and CNS myelination. This Gallus gallus (Chicken) protein is Transcription factor SOX-10 (SOX10).